Reading from the N-terminus, the 192-residue chain is Ion-translocating oxidoreductase complex subunit A (192 aa).

A run of 6 helical transmembrane segments spans residues 5 to 25, 39 to 59, 72 to 92, 102 to 122, 134 to 154, and 171 to 191; these read LLLL…FLGL, IGMS…SFLV, LRTM…EMLV, ALGI…VALL, AIYG…FSAM, and AIAM…TGLV.

It belongs to the NqrDE/RnfAE family. As to quaternary structure, the complex is composed of six subunits: RnfA, RnfB, RnfC, RnfD, RnfE and RnfG.

The protein resides in the cell inner membrane. Part of a membrane-bound complex that couples electron transfer with translocation of ions across the membrane. The polypeptide is Ion-translocating oxidoreductase complex subunit A (Shewanella amazonensis (strain ATCC BAA-1098 / SB2B)).